Here is a 94-residue protein sequence, read N- to C-terminus: Co-chaperonin GroES (94 aa).

This sequence belongs to the GroES chaperonin family. As to quaternary structure, heptamer of 7 subunits arranged in a ring. Interacts with the chaperonin GroEL.

It is found in the cytoplasm. Together with the chaperonin GroEL, plays an essential role in assisting protein folding. The GroEL-GroES system forms a nano-cage that allows encapsulation of the non-native substrate proteins and provides a physical environment optimized to promote and accelerate protein folding. GroES binds to the apical surface of the GroEL ring, thereby capping the opening of the GroEL channel. The sequence is that of Co-chaperonin GroES from Streptococcus equinus (Streptococcus bovis).